Here is a 194-residue protein sequence, read N- to C-terminus: Imidazoleglycerol-phosphate dehydratase (194 aa).

Belongs to the imidazoleglycerol-phosphate dehydratase family.

It localises to the cytoplasm. The enzyme catalyses D-erythro-1-(imidazol-4-yl)glycerol 3-phosphate = 3-(imidazol-4-yl)-2-oxopropyl phosphate + H2O. It participates in amino-acid biosynthesis; L-histidine biosynthesis; L-histidine from 5-phospho-alpha-D-ribose 1-diphosphate: step 6/9. This Ruminiclostridium cellulolyticum (strain ATCC 35319 / DSM 5812 / JCM 6584 / H10) (Clostridium cellulolyticum) protein is Imidazoleglycerol-phosphate dehydratase.